The chain runs to 214 residues: Large ribosomal subunit protein uL16-like (214 aa).

This sequence belongs to the universal ribosomal protein uL16 family. As to quaternary structure, component of a male germ cell-specific 60S large ribosomal subunit (LSU), which contains RPL10L and RPL39L, instead of RPL10 and RPL39 paralogs. The composition of the rest of the complex is similar to classical ribosomes. Testis-specific.

It is found in the cytoplasm. Functionally, testis-specific component of the ribosome, which is required for the transition from prophase to metaphase in male meiosis I. Compensates for the inactivated X-linked RPL10 paralog during spermatogenesis. The ribosome is a large ribonucleoprotein complex responsible for the synthesis of proteins in the cell. The male germ cell-specific ribosome displays a ribosomal polypeptide exit tunnel of distinct size and charge states compared with the classical ribosome. It is responsible for regulating the biosynthesis and folding of a subset of male germ-cell-specific proteins that are essential for the formation of sperm. The chain is Large ribosomal subunit protein uL16-like from Mus musculus (Mouse).